We begin with the raw amino-acid sequence, 160 residues long: Nucleotide-binding protein AHA_1129 (160 aa).

The protein belongs to the YajQ family.

Nucleotide-binding protein. The sequence is that of Nucleotide-binding protein AHA_1129 from Aeromonas hydrophila subsp. hydrophila (strain ATCC 7966 / DSM 30187 / BCRC 13018 / CCUG 14551 / JCM 1027 / KCTC 2358 / NCIMB 9240 / NCTC 8049).